The following is a 175-amino-acid chain: Co-chaperone protein HscB homolog (175 aa).

Residues 7–79 (SHFDLFHLPA…LKRATYLLSL (73 aa)) enclose the J domain.

It belongs to the HscB family. In terms of assembly, interacts with HscA and stimulates its ATPase activity.

Its function is as follows. Co-chaperone involved in the maturation of iron-sulfur cluster-containing proteins. Seems to help targeting proteins to be folded toward HscA. The chain is Co-chaperone protein HscB homolog from Burkholderia multivorans (strain ATCC 17616 / 249).